We begin with the raw amino-acid sequence, 335 residues long: MKMIGFEKPFKLEEGNLFKVYEQRKPTPENDDILVKVNSISVNPVDTKQRQMEVTQAPRVLGFDAIGTVEAIGPDVTLFSPGDVVFYAGSPNRQGSNATYQLVSEAIVAKAPHNISANEAVSLPLTGITAYETFFDTFKISHNPAENEGKSVLIINGAGGVGSIATQIAKRYGLTVITTASRQETTEWCEKMGADIVLNHKEDLVRQFKEKEIPLVDYIFCTYNTDLYYNTMIELIKPLGHITTIVAFNEDQDLNALKLKSITFTHEFMFARPIHRTPDMIKQHEYLEDITKNIESGHYQPTTTQVFEGLSPENLYQAHQLLEKQSMIGKLVINI.

This sequence belongs to the zinc-containing alcohol dehydrogenase family. Quinone oxidoreductase subfamily.

The sequence is that of Zinc-type alcohol dehydrogenase-like protein SAS2087 from Staphylococcus aureus (strain MSSA476).